An 852-amino-acid polypeptide reads, in one-letter code: HHLTANTQSIPHFSTTLNAGSSARKRRSLYLRWGKGSNKIIACVGEGATSVPYQSAEKNDSLYSSTLVKREFPPGFWKDDLIDSLTSSHKVAASDEKRIETLISEIKNMFRCMGYGETNPSAYDTAWVARIPALDGSDNPHFPETVEWILQNQLKDGSWGEGFYFLAYDRILATLACIITLTLWRTGETQVHKGIEFFRTQAGKMEDEADSHRPSGFEIVFPAMLKEAKILGLDLPYDLPFLKQIIEKREAKLKRIPTDVLYALPTTLLYSLEGLQEIVDWQKIMKLQSKDGSFLSSPASTAAVFMRTGNKKCLDFLNFVLKKFGNHVPCHYPLDLFERLWAVDTVERLGIDRHFKEEIKDALDYVYSHWDERGIGWARENPVPDIDDTAMGLRILRLHGYNVSSDVLKTFRDENGEFFCFLGQTQRGVTDMLNVNRCSHVSFPGETIMEEAKLCTERYLRNALENVDAFDKWAFKKNIRGEVEYALKYTWHKSMPRLEARSYIENYGPNDAWLGKTVYRMPYISNEKYLELAKLDFNKLQSIHQTELQDLRRWWKSSGFSKLNFTRERVTEIYFSSASFMFEPEFSKCREVYTKASIFTLIFDDLYDAHGSLDDLKLFSEAVKRWDLSLLERMPQEMKICFLGFYNTFNEIAEEVHKRQGRDMLGHIQNVWEILLAAYTKEAEWSKTKYVPSFDEYIENASVSITLGTIVLISTLFIGEVLTDHVLSKINHGSRFLHLMGLTGRLVNDTKTYQAERGQGEEASAIQCYMKDHPEISEEEALNHVYNVMENALQELNKEFVNNKEVPPNCRRLVFNTARIMQLFYMQGDGLTLSHDMEIKDHVKTCLFIPIA.

A chloroplast-targeting transit peptide spans 1-53 (HHLTANTQSIPHFSTTLNAGSSARKRRSLYLRWGKGSNKIIACVGEGATSVPY). Lysine 252 contacts substrate. The Mg(2+) site is built by aspartate 385 and aspartate 387. Positions 385–388 (DIDD) match the DXDD motif motif. Residue lysine 472 participates in substrate binding. Mg(2+)-binding residues include aspartate 604, aspartate 608, asparagine 748, threonine 752, and glutamate 756. The DDXXD motif motif lies at 604-608 (DDLYD).

Belongs to the terpene synthase family. Tpsd subfamily. It depends on Mg(2+) as a cofactor.

It is found in the plastid. It localises to the chloroplast. The enzyme catalyses (2E,6E,10E)-geranylgeranyl diphosphate = (+)-copalyl diphosphate. It catalyses the reaction (+)-copalyl diphosphate = isopimara-7,15-diene + diphosphate. The protein operates within terpene metabolism; oleoresin biosynthesis. Its function is as follows. Involved in defensive oleoresin formation in conifers in response to insect attack or other injury. Involved in diterpene (C20) olefins biosynthesis. Bifunctional enzyme that catalyzes two sequential cyclizations of geranylgeranyl diphosphate (GGPP) to isopimara-7,15-diene. The chain is Bifunctional isopimaradiene synthase, chloroplastic (TPS-ISO) from Abies balsamea (Balsam fir).